The sequence spans 72 residues: uncharacterized protein (72 aa).

This is an uncharacterized protein from Escherichia coli (Bacteriophage T4).